The sequence spans 256 residues: Large ribosomal subunit protein eL8B (256 aa).

The disordered stretch occupies residues 1–37 (MAPGKKVAPAPFGAKSTKSNKAKNPLTHSTPKNFGIG).

It belongs to the eukaryotic ribosomal protein eL8 family. In terms of assembly, component of the large ribosomal subunit (LSU). Mature yeast ribosomes consist of a small (40S) and a large (60S) subunit. The 40S small subunit contains 1 molecule of ribosomal RNA (18S rRNA) and 33 different proteins (encoded by 57 genes). The large 60S subunit contains 3 rRNA molecules (25S, 5.8S and 5S rRNA) and 46 different proteins (encoded by 81 genes).

It localises to the cytoplasm. Functionally, component of the ribosome, a large ribonucleoprotein complex responsible for the synthesis of proteins in the cell. The small ribosomal subunit (SSU) binds messenger RNAs (mRNAs) and translates the encoded message by selecting cognate aminoacyl-transfer RNA (tRNA) molecules. The large subunit (LSU) contains the ribosomal catalytic site termed the peptidyl transferase center (PTC), which catalyzes the formation of peptide bonds, thereby polymerizing the amino acids delivered by tRNAs into a polypeptide chain. The nascent polypeptides leave the ribosome through a tunnel in the LSU and interact with protein factors that function in enzymatic processing, targeting, and the membrane insertion of nascent chains at the exit of the ribosomal tunnel. The protein is Large ribosomal subunit protein eL8B of Saccharomyces cerevisiae (strain ATCC 204508 / S288c) (Baker's yeast).